Here is a 61-residue protein sequence, read N- to C-terminus: Temporin-ALi (61 aa).

The signal sequence occupies residues 1–22 (MFPLKKSLLLLFFLATINLSLC). Residues 23–46 (EQERNAEEERRDEPDERNAEVEKR) constitute a propeptide that is removed on maturation. Leucine amide is present on Leu59.

It belongs to the frog skin active peptide (FSAP) family. Temporin subfamily. In terms of tissue distribution, expressed by the skin glands.

The protein localises to the secreted. In terms of biological role, antimicrobial peptide with activity against Gram-positive and Gram-negative bacteria and against fungi. Has been tested against S.aureus (MIC=7.5 ug/mL), B.pumilus (MIC=7.5 ug/mL), B.cereus (MIC=75.0 ug/mL), E.coli (MIC=7.5 ug/mL), B.dysenteriae (MIC=20.0 ug/mL), A.cacoaceticus (MIC=60.0 ug/mL), P.aeruginosa (MIC=5.0 ug/mL) and C.albicans (MIC=5.0 ug/mL). Also shows a weak hemolytic activity. This Amolops loloensis (Lolokou Sucker Frog) protein is Temporin-ALi.